Consider the following 310-residue polypeptide: p-hydroxybenzoic acid efflux pump subunit AaeA (310 aa).

The helical transmembrane segment at 12–32 (VITLLLVIIAIVLIFRIWVFY) threads the bilayer.

Belongs to the membrane fusion protein (MFP) (TC 8.A.1) family.

The protein resides in the cell inner membrane. Functionally, forms an efflux pump with AaeB. The chain is p-hydroxybenzoic acid efflux pump subunit AaeA from Erwinia tasmaniensis (strain DSM 17950 / CFBP 7177 / CIP 109463 / NCPPB 4357 / Et1/99).